The chain runs to 154 residues: Ribosome maturation factor RimP (154 aa).

This sequence belongs to the RimP family.

The protein resides in the cytoplasm. Functionally, required for maturation of 30S ribosomal subunits. The polypeptide is Ribosome maturation factor RimP (Heliobacterium modesticaldum (strain ATCC 51547 / Ice1)).